The sequence spans 892 residues: Ice-binding protein 1 (892 aa).

An N-terminal signal peptide occupies residues 1-23; sequence MNHSIKKTYLVFTMLLGFILLAG. Cys24 carries N-palmitoyl cysteine lipidation. Cys24 is lipidated: S-diacylglycerol cysteine. 7 BIG2 domains span residues 43-111, 134-205, 221-288, 306-386, 392-471, 478-558, and 565-638; these read TSIA…ITAS, TALA…SLGS, SIAL…ITAD, TSIM…TVTV, TSIA…TNLT, NSIV…NLTV, and SIDV…QASL. The short motif at 866 to 869 is the Ice-binding site motif (T-A/G-X-T/N) element; the sequence is TGAN.

It belongs to the ice-binding protein family.

It localises to the cell outer membrane. Ice-binding adhesion protein that adsorbs this bacterium onto ice to maintain a favorable position in its aquatic habitat. Inhibits growth of the ice crystals. Has high thermal hysteresis (TH) activity, which is the ability to lower the freezing point of an aqueous solution below its melting point. The TH activity of this protein is approximately 1.4 degrees Celsius at 25 uM and little below 2 degrees Celsius at 80 uM. The chain is Ice-binding protein 1 from Shewanella frigidimarina (strain NCIMB 400).